The chain runs to 389 residues: Na(+)/H(+) antiporter NhaA (389 aa).

Helical transmembrane passes span 17 to 37 (ILLLVAVVLAMLMANSPLAGL), 59 to 79 (LLLWINDGLMALFFLLIGLEV), 95 to 115 (SLPTFAAIGGMLVPAGIYLLF), 124 to 144 (VGWAIPAATDIAFALGIMALL), 154 to 174 (VFLLALAIIDDLGVIVIIALF), 177 to 197 (SDLSTISLIIASIAIVGLVAL), 213 to 233 (LVLWVAVLKSGVHATLAGVII), 261 to 281 (FLILPVFAFANAGVALGNMSL), 287 to 307 (PVPVGIALGLMLGKPIGVMLF), 328 to 348 (IAPVAAMCGIGFTMSMFIASL), and 363 to 383 (LGTLIGSILAALIGYFWLSKV).

The protein belongs to the NhaA Na(+)/H(+) (TC 2.A.33) antiporter family.

The protein resides in the cell inner membrane. It carries out the reaction Na(+)(in) + 2 H(+)(out) = Na(+)(out) + 2 H(+)(in). In terms of biological role, na(+)/H(+) antiporter that extrudes sodium in exchange for external protons. The polypeptide is Na(+)/H(+) antiporter NhaA (Shewanella sp. (strain ANA-3)).